The following is a 281-amino-acid chain: Diaminopimelate epimerase (281 aa).

The substrate site is built by asparagine 14 and asparagine 65. Cysteine 74 functions as the Proton donor in the catalytic mechanism. Substrate is bound by residues 75-76 (GN), asparagine 165, asparagine 198, and 216-217 (ER). Cysteine 225 acts as the Proton acceptor in catalysis. 226 to 227 (GT) contacts substrate.

Belongs to the diaminopimelate epimerase family. Homodimer.

Its subcellular location is the cytoplasm. The catalysed reaction is (2S,6S)-2,6-diaminopimelate = meso-2,6-diaminopimelate. The protein operates within amino-acid biosynthesis; L-lysine biosynthesis via DAP pathway; DL-2,6-diaminopimelate from LL-2,6-diaminopimelate: step 1/1. Catalyzes the stereoinversion of LL-2,6-diaminopimelate (L,L-DAP) to meso-diaminopimelate (meso-DAP), a precursor of L-lysine and an essential component of the bacterial peptidoglycan. The chain is Diaminopimelate epimerase from Leptospira interrogans serogroup Icterohaemorrhagiae serovar copenhageni (strain Fiocruz L1-130).